We begin with the raw amino-acid sequence, 541 residues long: Mesoderm induction early response protein 2 (541 aa).

S11 carries the phosphoserine modification. Disordered regions lie at residues 100–119 and 131–186; these read DPISEQESEGGDTAPALPDM and LSGE…EEDA. Residues 140 to 165 are compositionally biased toward polar residues; that stretch reads QSSADDLTPSVTSHEASDLFHNQSGS. Positions 194–291 constitute an ELM2 domain; sequence KEIMVGPQFQ…EALRRLRFNV (98 aa). The region spanning 296–348 is the SANT domain; it reads DGLCAWSEEECRNFEHGFRVHGKNFHLIQANKVRTRSVGECVEYYYLWKKSER. A disordered region spans residues 364–440; that stretch reads VSSGTTDTEQ…EPPAVPSLQQ (77 aa).

As to quaternary structure, part of a complex containing at least CDYL, MIER1, MIER2, HDAC1 and HDAC2.

Its subcellular location is the nucleus. Functionally, transcriptional repressor. The chain is Mesoderm induction early response protein 2 (Mier2) from Mus musculus (Mouse).